Here is a 430-residue protein sequence, read N- to C-terminus: Enolase (430 aa).

Gln-162 contacts (2R)-2-phosphoglycerate. The active-site Proton donor is Glu-204. Residues Asp-242, Glu-289, and Asp-316 each coordinate Mg(2+). Residues Lys-341, Arg-370, Ser-371, and Lys-392 each coordinate (2R)-2-phosphoglycerate. Lys-341 acts as the Proton acceptor in catalysis.

Belongs to the enolase family. Requires Mg(2+) as cofactor.

It is found in the cytoplasm. Its subcellular location is the secreted. The protein resides in the cell surface. The enzyme catalyses (2R)-2-phosphoglycerate = phosphoenolpyruvate + H2O. Its pathway is carbohydrate degradation; glycolysis; pyruvate from D-glyceraldehyde 3-phosphate: step 4/5. Functionally, catalyzes the reversible conversion of 2-phosphoglycerate (2-PG) into phosphoenolpyruvate (PEP). It is essential for the degradation of carbohydrates via glycolysis. The polypeptide is Enolase (Flavobacterium johnsoniae (strain ATCC 17061 / DSM 2064 / JCM 8514 / BCRC 14874 / CCUG 350202 / NBRC 14942 / NCIMB 11054 / UW101) (Cytophaga johnsonae)).